The following is a 707-amino-acid chain: Translation initiation factor eIF2B subunit epsilon (707 aa).

Disordered regions lie at residues 489–526 and 686–707; these read HDDI…SVKF and AEEE…DESD. The region spanning 516–693 is the W2 domain; that stretch reads DNPIEPDSVK…KSAEEESDDS (178 aa). Residues 688-707 show a composition bias toward acidic residues; it reads EESDDSDDSDDDDDDSDESD.

This sequence belongs to the eIF-2B gamma/epsilon subunits family. In terms of assembly, component of the translation initiation factor 2B (eIF2B) complex which is a heterodecamer of two sets of five different subunits: alpha, beta, gamma, delta and epsilon. Subunits alpha, beta and delta comprise a regulatory subcomplex and subunits epsilon and gamma comprise a catalytic subcomplex. Within the complex, the hexameric regulatory complex resides at the center, with the two heterodimeric catalytic subcomplexes bound on opposite sides.

The protein localises to the cytoplasm. Its subcellular location is the cytosol. Its function is as follows. Acts as a component of the translation initiation factor 2B (eIF2B) complex, which catalyzes the exchange of GDP for GTP on eukaryotic initiation factor 2 (eIF2) gamma subunit. Its guanine nucleotide exchange factor activity is repressed when bound to eIF2 complex phosphorylated on the alpha subunit, thereby limiting the amount of methionyl-initiator methionine tRNA available to the ribosome and consequently global translation is repressed. This Dictyostelium discoideum (Social amoeba) protein is Translation initiation factor eIF2B subunit epsilon (eif2b5).